Consider the following 117-residue polypeptide: Large ribosomal subunit protein eL8 (117 aa).

This sequence belongs to the eukaryotic ribosomal protein eL8 family. Part of the 50S ribosomal subunit. Probably part of the RNase P complex.

It is found in the cytoplasm. Its function is as follows. Multifunctional RNA-binding protein that recognizes the K-turn motif in ribosomal RNA, the RNA component of RNase P, box H/ACA, box C/D and box C'/D' sRNAs. In Methanocaldococcus jannaschii (strain ATCC 43067 / DSM 2661 / JAL-1 / JCM 10045 / NBRC 100440) (Methanococcus jannaschii), this protein is Large ribosomal subunit protein eL8.